A 314-amino-acid polypeptide reads, in one-letter code: Aspartate carbamoyltransferase catalytic subunit (314 aa).

Arg53 and Thr54 together coordinate carbamoyl phosphate. Residue Lys82 participates in L-aspartate binding. Residues Arg103, His131, and Gln134 each coordinate carbamoyl phosphate. Residues Arg164 and Arg230 each contribute to the L-aspartate site. Carbamoyl phosphate is bound by residues Leu267 and Pro268.

It belongs to the aspartate/ornithine carbamoyltransferase superfamily. ATCase family. As to quaternary structure, heterooligomer of catalytic and regulatory chains.

The enzyme catalyses carbamoyl phosphate + L-aspartate = N-carbamoyl-L-aspartate + phosphate + H(+). It functions in the pathway pyrimidine metabolism; UMP biosynthesis via de novo pathway; (S)-dihydroorotate from bicarbonate: step 2/3. Catalyzes the condensation of carbamoyl phosphate and aspartate to form carbamoyl aspartate and inorganic phosphate, the committed step in the de novo pyrimidine nucleotide biosynthesis pathway. This Methanococcus aeolicus (strain ATCC BAA-1280 / DSM 17508 / OCM 812 / Nankai-3) protein is Aspartate carbamoyltransferase catalytic subunit.